The following is a 323-amino-acid chain: Methionyl-tRNA formyltransferase (323 aa).

121–124 (SLLP) serves as a coordination point for (6S)-5,6,7,8-tetrahydrofolate.

This sequence belongs to the Fmt family.

It carries out the reaction L-methionyl-tRNA(fMet) + (6R)-10-formyltetrahydrofolate = N-formyl-L-methionyl-tRNA(fMet) + (6S)-5,6,7,8-tetrahydrofolate + H(+). Its function is as follows. Attaches a formyl group to the free amino group of methionyl-tRNA(fMet). The formyl group appears to play a dual role in the initiator identity of N-formylmethionyl-tRNA by promoting its recognition by IF2 and preventing the misappropriation of this tRNA by the elongation apparatus. The sequence is that of Methionyl-tRNA formyltransferase from Desulfotalea psychrophila (strain LSv54 / DSM 12343).